The primary structure comprises 331 residues: D-galactose/methyl-galactoside binding periplasmic protein MglB (331 aa).

An N-terminal signal peptide occupies residues 1 to 24 (MKKTAVLSTVAFAIALGSASASFA). The beta-D-galactose site is built by aspartate 38 and asparagine 115. Positions 38 and 115 each coordinate beta-D-glucose. Aspartate 158, asparagine 160, aspartate 162, lysine 164, and glutamine 166 together coordinate Ca(2+). Beta-D-galactose is bound by residues histidine 176, aspartate 178, and arginine 182. Histidine 176, aspartate 178, and arginine 182 together coordinate beta-D-glucose. Residue glutamate 229 coordinates Ca(2+). 3 residues coordinate beta-D-galactose: asparagine 235, aspartate 259, and asparagine 279. Positions 235, 259, and 279 each coordinate beta-D-glucose.

It belongs to the bacterial solute-binding protein 2 family. In terms of assembly, the ABC transporter complex is composed of one ATP-binding protein (MglA), two transmembrane proteins (MglC) and a solute-binding protein (MglB).

The protein resides in the periplasm. In terms of biological role, part of the ABC transporter complex MglABC involved in galactose/methyl galactoside import. The polypeptide is D-galactose/methyl-galactoside binding periplasmic protein MglB (mglB) (Haemophilus influenzae (strain ATCC 51907 / DSM 11121 / KW20 / Rd)).